Consider the following 110-residue polypeptide: Flagellar hook-basal body complex protein FliE (110 aa).

The protein belongs to the FliE family.

The protein localises to the bacterial flagellum basal body. This is Flagellar hook-basal body complex protein FliE from Ralstonia nicotianae (strain ATCC BAA-1114 / GMI1000) (Ralstonia solanacearum).